The sequence spans 108 residues: Glutaredoxin-like protein YDR286C homolog (108 aa).

Cys-22 and Cys-25 are joined by a disulfide.

It belongs to the glutaredoxin family. YDR286C subfamily.

This Dictyostelium discoideum (Social amoeba) protein is Glutaredoxin-like protein YDR286C homolog.